Here is a 196-residue protein sequence, read N- to C-terminus: Molybdenum cofactor guanylyltransferase (196 aa).

Residues 10 to 12, K23, N51, D69, and D99 contribute to the GTP site; that span reads LAG. D99 serves as a coordination point for Mg(2+).

It belongs to the MobA family. Monomer. The cofactor is Mg(2+).

The protein resides in the cytoplasm. It catalyses the reaction Mo-molybdopterin + GTP + H(+) = Mo-molybdopterin guanine dinucleotide + diphosphate. Functionally, transfers a GMP moiety from GTP to Mo-molybdopterin (Mo-MPT) cofactor (Moco or molybdenum cofactor) to form Mo-molybdopterin guanine dinucleotide (Mo-MGD) cofactor. This Shewanella woodyi (strain ATCC 51908 / MS32) protein is Molybdenum cofactor guanylyltransferase.